A 148-amino-acid chain; its full sequence is MTTTPIHPTRPQTNSNRVIPTSTQGSTLADILERVLDKGIVIAGDISISIASTELIHIRIRLLISSVDKAREMGINWWENDPYLSSKSQRLVEENQQLQQRLESLETQLRLLTSAAKEETTLTANNPEDLQPMYEVNSQEGDNSQLEA.

2 disordered regions span residues 1-21 (MTTTPIHPTRPQTNSNRVIPT) and 118-148 (EETTLTANNPEDLQPMYEVNSQEGDNSQLEA). Residues 136 to 148 (VNSQEGDNSQLEA) show a composition bias toward polar residues.

The protein belongs to the gas vesicle GvpA family. Interacts with GvpA.

It is found in the gas vesicle. A minor component of the gas vesicle, might be involved in nucleating gas vesicle formation. Gas vesicles (GV) are hollow, gas filled proteinaceous nanostructures. During planktonic growth they allow positioning of the organism at a favorable depth for light or nutrient acquisition. Functionally, cluster expression in E.coli (gvpA1-gvpA2-gvpC-gvpN-gvpJ-gvpK-gvpF-gvpG-gvpV-gvpW) allows cells to float and produces irregularly shaped gas vesicles. The polypeptide is Gas vesicle protein J (Nostoc sp. (strain PCC 7120 / SAG 25.82 / UTEX 2576)).